We begin with the raw amino-acid sequence, 355 residues long: Ataxin-3 (355 aa).

Met-1 participates in a covalent cross-link: Peptide (Met-Gly) (interchain with G-Cter in ubiquitin). The region spanning 1 to 180 (MESIFHEKQE…DCEADQLLQM (180 aa)) is the Josephin domain. Cys-14 serves as the catalytic Nucleophile. His-119 acts as the Proton acceptor in catalysis. Asn-134 is an active-site residue. Lys-200 participates in a covalent cross-link: Glycyl lysine isopeptide (Lys-Gly) (interchain with G-Cter in ubiquitin). UIM domains follow at residues 224–243 (DDED…IDME) and 244–263 (DEEA…SSRG). Positions 257–333 (MQGSSRGMCE…AGNAMSEEDV (77 aa)) are disordered. 3 positions are modified to phosphoserine: Ser-268, Ser-272, and Ser-273. A compositionally biased stretch (basic and acidic residues) spans 279–301 (EELRKRREAYFEKQQHQQQEADR). Residues 312–326 (PTTSSGGLRSNQAGN) are compositionally biased toward polar residues. Residue Ser-321 is modified to Phosphoserine. Residues 329-348 (SEEDVLRATVTVSLETAKDS) enclose the UIM 3 domain.

As to quaternary structure, interacts with STUB1/CHIP (when monoubiquitinated). Interacts with DNA repair proteins RAD23A and RAD23B. Interacts with BECN1 (via its poly-Gln domain). Interacts with PRKN, UBR2, VCP and tubulin. Monoubiquitinated by UBE2W, possibly leading to activate the deubiquitinating enzyme activity. Ubiquitously expressed.

It is found in the nucleus matrix. The protein localises to the nucleus. Its subcellular location is the lysosome membrane. It carries out the reaction Thiol-dependent hydrolysis of ester, thioester, amide, peptide and isopeptide bonds formed by the C-terminal Gly of ubiquitin (a 76-residue protein attached to proteins as an intracellular targeting signal).. Deubiquitinating enzyme involved in protein homeostasis maintenance, transcription, cytoskeleton regulation, myogenesis and degradation of misfolded chaperone substrates. Binds long polyubiquitin chains and trims them, while it has weak or no activity against chains of 4 or less ubiquitins. Involved in degradation of misfolded chaperone substrates via its interaction with STUB1/CHIP: recruited to monoubiquitinated STUB1/CHIP, and restricts the length of ubiquitin chain attached to STUB1/CHIP substrates and preventing further chain extension. Interacts with key regulators of transcription and represses transcription: acts as a histone-binding protein that regulates transcription. Acts as a negative regulator of mTORC1 signaling in response to amino acid deprivation by mediating deubiquitination of RHEB, thereby promoting RHEB inactivation by the TSC-TBC complex. Regulates autophagy via the deubiquitination of 'Lys-402' of BECN1 leading to the stabilization of BECN1. The sequence is that of Ataxin-3 (Atxn3) from Rattus norvegicus (Rat).